The following is a 155-amino-acid chain: Small ribosomal subunit protein uS7 (155 aa).

The protein belongs to the universal ribosomal protein uS7 family. In terms of assembly, part of the 30S ribosomal subunit. Contacts proteins S9 and S11.

One of the primary rRNA binding proteins, it binds directly to 16S rRNA where it nucleates assembly of the head domain of the 30S subunit. Is located at the subunit interface close to the decoding center, probably blocks exit of the E-site tRNA. The sequence is that of Small ribosomal subunit protein uS7 from Thermosipho africanus (strain TCF52B).